The following is a 235-amino-acid chain: Glucosamine-6-phosphate deaminase (235 aa).

Catalysis depends on Asp-62, which acts as the Proton acceptor; for enolization step. The active-site For ring-opening step is the Asn-128. His-130 functions as the Proton acceptor; for ring-opening step in the catalytic mechanism. Glu-135 (for ring-opening step) is an active-site residue.

Belongs to the glucosamine/galactosamine-6-phosphate isomerase family. NagB subfamily.

The enzyme catalyses alpha-D-glucosamine 6-phosphate + H2O = beta-D-fructose 6-phosphate + NH4(+). It participates in amino-sugar metabolism; N-acetylneuraminate degradation; D-fructose 6-phosphate from N-acetylneuraminate: step 5/5. Functionally, catalyzes the reversible isomerization-deamination of glucosamine 6-phosphate (GlcN6P) to form fructose 6-phosphate (Fru6P) and ammonium ion. This chain is Glucosamine-6-phosphate deaminase, found in Streptococcus pneumoniae serotype 2 (strain D39 / NCTC 7466).